We begin with the raw amino-acid sequence, 465 residues long: L-seryl-tRNA(Sec) selenium transferase (465 aa).

K294 is subject to N6-(pyridoxal phosphate)lysine.

The protein belongs to the SelA family. Pyridoxal 5'-phosphate is required as a cofactor.

The protein localises to the cytoplasm. The catalysed reaction is L-seryl-tRNA(Sec) + selenophosphate + H(+) = L-selenocysteinyl-tRNA(Sec) + phosphate. It functions in the pathway aminoacyl-tRNA biosynthesis; selenocysteinyl-tRNA(Sec) biosynthesis; selenocysteinyl-tRNA(Sec) from L-seryl-tRNA(Sec) (bacterial route): step 1/1. Functionally, converts seryl-tRNA(Sec) to selenocysteinyl-tRNA(Sec) required for selenoprotein biosynthesis. This is L-seryl-tRNA(Sec) selenium transferase from Maridesulfovibrio salexigens (strain ATCC 14822 / DSM 2638 / NCIMB 8403 / VKM B-1763) (Desulfovibrio salexigens).